A 538-amino-acid polypeptide reads, in one-letter code: RNA-binding protein RO60 (538 aa).

Positions 16–369 constitute a TROVE domain; it reads VPNSEGCYVW…SFKLVEPTGK (354 aa). An RNA-binding region spans residues 120–284; sequence RIPTHLFTFI…DMPLTALLRN (165 aa). Residues 361 to 538 are VWFA-like domain; that stretch reads FKLVEPTGKR…VIRNFTLDLI (178 aa). A divalent metal cation is bound by residues serine 378, serine 380, and threonine 445.

Belongs to the Ro 60 kDa family.

It is found in the cytoplasm. RNA-binding protein that binds to misfolded non-coding RNAs, pre-5S rRNA, and several small cytoplasmic RNA molecules known as Y RNAs. May play roles in cilia formation and/or maintenance. The protein is RNA-binding protein RO60 of Xenopus laevis (African clawed frog).